Reading from the N-terminus, the 884-residue chain is Protein translocase subunit SecA (884 aa).

ATP contacts are provided by residues Gln-88, 106–110 (GEGKT), and Asp-509. Residues 822–884 (EQKKLKMSGA…PKKGLFANND (63 aa)) are disordered. Residues 833 to 842 (KGGEDLEETK) are compositionally biased toward basic and acidic residues. The Zn(2+) site is built by Cys-858, Cys-860, Cys-869, and His-870.

This sequence belongs to the SecA family. As to quaternary structure, monomer and homodimer. Part of the essential Sec protein translocation apparatus which comprises SecA, SecYEG and auxiliary proteins SecDF-YajC and YidC. Zn(2+) serves as cofactor.

Its subcellular location is the cell inner membrane. It localises to the cytoplasm. The catalysed reaction is ATP + H2O + cellular proteinSide 1 = ADP + phosphate + cellular proteinSide 2.. Part of the Sec protein translocase complex. Interacts with the SecYEG preprotein conducting channel. Has a central role in coupling the hydrolysis of ATP to the transfer of proteins into and across the cell membrane, serving as an ATP-driven molecular motor driving the stepwise translocation of polypeptide chains across the membrane. The polypeptide is Protein translocase subunit SecA (Campylobacter hominis (strain ATCC BAA-381 / DSM 21671 / CCUG 45161 / LMG 19568 / NCTC 13146 / CH001A)).